A 97-amino-acid chain; its full sequence is Meromycolate extension acyl carrier protein (97 aa).

Residues 3–81 (ASQQEIIAGL…DVVAYIQKLE (79 aa)) enclose the Carrier domain. The residue at position 41 (Ser41) is an O-(pantetheine 4'-phosphoryl)serine.

This sequence belongs to the acyl carrier protein (ACP) family. Post-translationally, 4'-phosphopantetheine is transferred from CoA to a specific serine of apo-AcpM.

The protein resides in the cytoplasm. Acyl carrier protein involved in meromycolate extension. The polypeptide is Meromycolate extension acyl carrier protein (acpM) (Mycolicibacterium aurum (Mycobacterium aurum)).